The following is a 741-amino-acid chain: Catalase-peroxidase 2 (741 aa).

The N-terminal stretch at 1–27 (MKINTLPTLSALTLAMSLALGAGMATA) is a signal peptide. Positions 106–229 (WHSAGVYRIF…MGATQMGLIY (124 aa)) form a cross-link, tryptophyl-tyrosyl-methioninium (Trp-Tyr) (with M-255). His107 functions as the Proton acceptor in the catalytic mechanism. Residues 229-255 (YVNPEGPNGVPDPLASAKEIRDTFGRM) constitute a cross-link (tryptophyl-tyrosyl-methioninium (Tyr-Met) (with W-106)). His270 lines the heme b pocket.

It belongs to the peroxidase family. Peroxidase/catalase subfamily. In terms of assembly, homodimer or homotetramer. Heme b is required as a cofactor. Post-translationally, formation of the three residue Trp-Tyr-Met cross-link is important for the catalase, but not the peroxidase activity of the enzyme.

The catalysed reaction is H2O2 + AH2 = A + 2 H2O. It catalyses the reaction 2 H2O2 = O2 + 2 H2O. Functionally, bifunctional enzyme with both catalase and broad-spectrum peroxidase activity. This Shewanella oneidensis (strain ATCC 700550 / JCM 31522 / CIP 106686 / LMG 19005 / NCIMB 14063 / MR-1) protein is Catalase-peroxidase 2.